A 397-amino-acid polypeptide reads, in one-letter code: 2,6-dihydroxypyridine 3-monooxygenase (397 aa).

FAD-binding positions include 14–16, 35–36, Val49, Leu120, Asp306, and 316–320; these read SIS, ER, and AAGGA.

As to quaternary structure, homodimer. Requires FAD as cofactor.

The enzyme catalyses 2,6-dihydroxypyridine + NADH + O2 + H(+) = 2,3,6-trihydroxypyridine + NAD(+) + H2O. Its pathway is alkaloid degradation; nicotine degradation. Catalyzes the conversion of 2,6-dihydroxypyridine into 2,3,6-trihydroxypyridine in the nicotine degradation pathway. In Paenarthrobacter nicotinovorans (Arthrobacter nicotinovorans), this protein is 2,6-dihydroxypyridine 3-monooxygenase (dhpH).